A 244-amino-acid polypeptide reads, in one-letter code: Derlin-2.2 (244 aa).

Over 1–21 the chain is Cytoplasmic; it reads MAQAVEEWYKQMPIITRSYLT. A helical membrane pass occupies residues 22–42; that stretch reads AAVITTVGCSLDIISPYNLYL. Over 43-96 the chain is Lumenal; the sequence is NPTLVVKQYQYWRLVTNFLYFRKMDLDFMFHMFFLARYCKLLEENSFRGKTADF. A helical transmembrane segment spans residues 97–117; it reads LYMLLFGASVLTGIVLIGGMI. Over 118 to 121 the chain is Cytoplasmic; sequence PYLS. The helical transmembrane segment at 122-142 threads the bilayer; it reads ASFAKIIFLSNSLTFMMVYVW. Topologically, residues 143–152 are lumenal; that stretch reads SKQNPYIHMS. Residues 153–173 form a helical membrane-spanning segment; that stretch reads FLGLFTFTAAYLPWVLLGFSI. Over 174 to 244 the chain is Cytoplasmic; the sequence is LVGASAWVDL…AAPFDEIHQD (71 aa).

The protein belongs to the derlin family.

It is found in the endoplasmic reticulum membrane. In terms of biological role, may be involved in the degradation process of specific misfolded endoplasmic reticulum (ER) luminal proteins. In Arabidopsis thaliana (Mouse-ear cress), this protein is Derlin-2.2 (DER2.2).